We begin with the raw amino-acid sequence, 520 residues long: Probable cytosol aminopeptidase (520 aa).

Mn(2+) is bound by residues lysine 232 and aspartate 237. Residue lysine 244 is part of the active site. Mn(2+) is bound by residues aspartate 255, aspartate 314, and glutamate 316. Arginine 318 is a catalytic residue. The tract at residues 488 to 520 (KAKKSTAKKATTKKTTTRKTASKTKSTKSKARK) is disordered.

Belongs to the peptidase M17 family. Requires Mn(2+) as cofactor.

The protein resides in the cytoplasm. The enzyme catalyses Release of an N-terminal amino acid, Xaa-|-Yaa-, in which Xaa is preferably Leu, but may be other amino acids including Pro although not Arg or Lys, and Yaa may be Pro. Amino acid amides and methyl esters are also readily hydrolyzed, but rates on arylamides are exceedingly low.. It carries out the reaction Release of an N-terminal amino acid, preferentially leucine, but not glutamic or aspartic acids.. Its function is as follows. Presumably involved in the processing and regular turnover of intracellular proteins. Catalyzes the removal of unsubstituted N-terminal amino acids from various peptides. This is Probable cytosol aminopeptidase (pepA) from Metamycoplasma salivarium (Mycoplasma salivarium).